Reading from the N-terminus, the 364-residue chain is D-alanine--D-alanine ligase A (364 aa).

The region spanning 145 to 348 is the ATP-grasp domain; that stretch reads KRLLRDAGLN…YTDLITRLIE (204 aa). An ATP-binding site is contributed by 175-230; it reads ESKLGLPLFVKPANQGSSVGVSKVTSEEQYTIAVDLAFEFDHKVIVEQGIKGREIE. Residues aspartate 302, glutamate 315, and asparagine 317 each coordinate Mg(2+).

It belongs to the D-alanine--D-alanine ligase family. Mg(2+) serves as cofactor. It depends on Mn(2+) as a cofactor.

The protein resides in the cytoplasm. The catalysed reaction is 2 D-alanine + ATP = D-alanyl-D-alanine + ADP + phosphate + H(+). Its pathway is cell wall biogenesis; peptidoglycan biosynthesis. In terms of biological role, cell wall formation. In Escherichia coli O6:H1 (strain CFT073 / ATCC 700928 / UPEC), this protein is D-alanine--D-alanine ligase A.